Here is an 869-residue protein sequence, read N- to C-terminus: MSTATLEQRAKRGEAPRANDAGHCAHPADGARRGYPRERIDAACDAACRSIAPAWPLDRAIAVNPHWERIGRPVREIAARMAVLADIKVFPPREQIRSAWESARIAPADLRYALQALPAAQAAGMTERNCIDALARPLNLPRLPLLIDVLDDDPLRHERLSWRQAITHQVSQTCAAYFDEHQADWRPHHDQSLYAFWRDTISHDHGIGVLMGLPRLGQSLRALPATRQEAEAWVLERLGLPEAVWPDYLEAVLLTVNGWASWCAYLGWQARLAGESDEHLRDLLAIRLAWGVLLLDCKDDAAARRAFAAVQGHWRDSAALLADAQARLLVDEVWQLAFEAGYQRELAGKLGAVGQPQTIPEAATPAEEIEVQAAFCIDVRSEPLRRAVESIWPAVQTIGFAGFFGLPVAYTPLATSARRPQLPGLLAPSLEVTDAVSGPAGEGGGTMRAAASTARRTRFALSNQASAATRLPGTSFSFVEAAGLGYLGKLRQWLKPSRNPRVRDDLAGLPPRYKAVCRPALVGIDDQAKADLAARILHGMGIARSLAPLVVLVGHASQSANNAHAAALDCGACCGQSGEVNVRVLAQLLNDRATRAGLAQRGIDVPDDTTFVAALHNTTTDEIEGFDVDLLNPIAAARWAKLLSVFGHASDQVRRERAVRVGLDPRMEGGRLLASLRERANDGAQTRPEWGLAGNAAFVIGPRTRSHGAVLDGRCFLHDYDFTQDTDGSLLELLMTAPMLVAHWINWQYHASTCDPAHMGCGNKVLHNVVGGHIGVFEGNSGDLRIGLSKQSLHDGQRWMHEPLRLTVIIDAPGASIERVIDRHPTVRHLIDHGWLHLWRFGETGLLRFSDRQWHPLAMGADPATRQSP.

The tract at residues 1–32 (MSTATLEQRAKRGEAPRANDAGHCAHPADGAR) is disordered. A compositionally biased stretch (basic and acidic residues) spans 8–17 (QRAKRGEAPR). Zn(2+)-binding residues include Cys376, Asp378, His555, and Cys570.

This sequence belongs to the inorganic carbon transporter (TC 9.A.2) DabA family. As to quaternary structure, forms a complex with DabB. Zn(2+) is required as a cofactor.

The protein localises to the cell inner membrane. Functionally, part of an energy-coupled inorganic carbon pump. This Burkholderia multivorans (strain ATCC 17616 / 249) protein is Probable inorganic carbon transporter subunit DabA.